We begin with the raw amino-acid sequence, 770 residues long: Penicillin-binding protein 1C (770 aa).

The Cytoplasmic segment spans residues 1–8 (MPRLLTKR). A helical; Signal-anchor for type II membrane protein membrane pass occupies residues 9-29 (GCWITLAAAPFLLFLAAWGAD). Residues 30–770 (KLWPLPLHEV…QIATVKFVMQ (741 aa)) lie on the Periplasmic side of the membrane. Residues 43 to 213 (RVVVAQDGTP…SRLRPDRWPE (171 aa)) are transglycosylase. The active-site Proton donor; for transglycosylase activity is Glu-84. Residues 278-559 (AGLQRRLEEL…FASAVPLLNQ (282 aa)) form a transpeptidase region. Residue Ser-342 is the Acyl-ester intermediate; for transpeptidase activity of the active site.

It in the N-terminal section; belongs to the glycosyltransferase 51 family. In the C-terminal section; belongs to the transpeptidase family.

The protein resides in the cell inner membrane. It carries out the reaction [GlcNAc-(1-&gt;4)-Mur2Ac(oyl-L-Ala-gamma-D-Glu-L-Lys-D-Ala-D-Ala)](n)-di-trans,octa-cis-undecaprenyl diphosphate + beta-D-GlcNAc-(1-&gt;4)-Mur2Ac(oyl-L-Ala-gamma-D-Glu-L-Lys-D-Ala-D-Ala)-di-trans,octa-cis-undecaprenyl diphosphate = [GlcNAc-(1-&gt;4)-Mur2Ac(oyl-L-Ala-gamma-D-Glu-L-Lys-D-Ala-D-Ala)](n+1)-di-trans,octa-cis-undecaprenyl diphosphate + di-trans,octa-cis-undecaprenyl diphosphate + H(+). It participates in cell wall biogenesis; peptidoglycan biosynthesis. With respect to regulation, transglycosylase activity can be inhibited by moenomycin. Cell wall formation. The enzyme has a penicillin-insensitive transglycosylase N-terminal domain (formation of linear glycan strands) and a transpeptidase C-terminal domain which may not be functional. The polypeptide is Penicillin-binding protein 1C (pbpC) (Escherichia coli (strain K12)).